The following is a 163-amino-acid chain: UPF0260 protein GOX1406 (163 aa).

It belongs to the UPF0260 family.

This is UPF0260 protein GOX1406 from Gluconobacter oxydans (strain 621H) (Gluconobacter suboxydans).